A 448-amino-acid chain; its full sequence is Beta-glucosidase A (448 aa).

E166 (proton donor) is an active-site residue. The Nucleophile role is filled by E355.

It belongs to the glycosyl hydrolase 1 family.

It catalyses the reaction Hydrolysis of terminal, non-reducing beta-D-glucosyl residues with release of beta-D-glucose.. It functions in the pathway glycan metabolism; cellulose degradation. The polypeptide is Beta-glucosidase A (bglA) (Acetivibrio thermocellus (strain ATCC 27405 / DSM 1237 / JCM 9322 / NBRC 103400 / NCIMB 10682 / NRRL B-4536 / VPI 7372) (Clostridium thermocellum)).